The chain runs to 86 residues: Omega-theraphotoxin-Hhn1f 2 (86 aa).

A signal peptide spans 1–21 (MKSIVFVALFGLALLAVVCSA). A propeptide spanning residues 22-50 (SEDAHKELLKEVVRAVVVDKTDAVQAEER) is cleaved from the precursor. 3 cysteine pairs are disulfide-bonded: Cys-52/Cys-66, Cys-59/Cys-71, and Cys-65/Cys-78.

It belongs to the neurotoxin 10 (Hwtx-1) family. 17 (Hntx-9) subfamily. As to expression, expressed by the venom gland.

The protein resides in the secreted. Functionally, ion channel inhibitor. The protein is Omega-theraphotoxin-Hhn1f 2 of Cyriopagopus hainanus (Chinese bird spider).